The sequence spans 573 residues: Mucin-13 (573 aa).

A signal peptide spans 1 to 17; it reads MKGFLLLSLSLLLVTVG. Over residues 16 to 234 the composition is skewed to low complexity; sequence VGSSSQASST…VPSGGSTGPS (219 aa). The interval 16–237 is disordered; the sequence is VGSSSQASST…GGSTGPSDLC (222 aa). The Extracellular segment spans residues 18 to 480; the sequence is SSSQASSTTS…FGYSGMNCKD (463 aa). The region spanning 233–273 is the EGF-like 1 domain; it reads PSDLCNPNPCKGTASCVKLHSKHFCLCLEGYYYNSSLSSCV. 3 disulfides stabilise this stretch: Cys237–Cys248, Cys242–Cys257, and Cys259–Cys272. N-linked (GlcNAc...) asparagine glycans are attached at residues Asn266, Asn316, and Asn397. One can recognise an SEA domain in the interval 274-391; the sequence is KGTTFPGDIS…DYVSINLCDH (118 aa). EGF-like domains are found at residues 385–425 and 425–467; these read SINL…PFCV and VAVT…RKCE. 6 cysteine pairs are disulfide-bonded: Cys389–Cys402, Cys394–Cys408, Cys410–Cys424, Cys429–Cys441, Cys433–Cys451, and Cys453–Cys466. The helical transmembrane segment at 481–508 threads the bilayer; the sequence is QFQLILTIVGTIAGALILILLIAFIVSA. The Cytoplasmic portion of the chain corresponds to 509-573; the sequence is RSKNKKKDGE…NQRSMPRPDY (65 aa). The segment at 548–573 is disordered; sequence PKVRTGVPSQTPNPYANQRSMPRPDY. The segment covering 554–567 has biased composition (polar residues); sequence VPSQTPNPYANQRS.

Homodimer of beta subunits. Post-translationally, cleaved into two subunits, alpha and beta, probably between the first EGF domain and the SEA domain. Beta subunit contains the cytoplasmic tail and alpha subunit the extracellular tail. The homooligomerization into dimers is dependent on intrachain disulfide bonds. In terms of processing, highly N-glycosylated.

The protein localises to the cell membrane. The protein resides in the secreted. Functionally, epithelial and hemopoietic transmembrane mucin that may play a role in cell signaling. The chain is Mucin-13 (Muc13) from Mus musculus (Mouse).